Consider the following 240-residue polypeptide: Transmembrane emp24 domain-containing protein 6 (240 aa).

The first 21 residues, 1 to 21 (MFPLLFVAGLVVLNLVSSARS), serve as a signal peptide directing secretion. The Lumenal portion of the chain corresponds to 22 to 200 (QKTEPLSGTG…FFLLQSNYNY (179 aa)). The 86-residue stretch at 53–138 (TECFWQFAHQ…SVQVYLNFGV (86 aa)) folds into the GOLD domain. N-linked (GlcNAc...) asparagine glycosylation is found at Asn-107 and Asn-156. A helical membrane pass occupies residues 201–223 (VNWWSTAQSLVIVLSGILQLYFL). The Cytoplasmic portion of the chain corresponds to 224–240 (KRLFNTPMTTETQKPRC).

This sequence belongs to the EMP24/GP25L family.

The protein localises to the endoplasmic reticulum membrane. The protein is Transmembrane emp24 domain-containing protein 6 (TMED6) of Bos taurus (Bovine).